The sequence spans 91 residues: Small ribosomal subunit protein uS19 (91 aa).

It belongs to the universal ribosomal protein uS19 family.

Functionally, protein S19 forms a complex with S13 that binds strongly to the 16S ribosomal RNA. The chain is Small ribosomal subunit protein uS19 from Methylibium petroleiphilum (strain ATCC BAA-1232 / LMG 22953 / PM1).